Here is a 129-residue protein sequence, read N- to C-terminus: Small ribosomal subunit protein uS11 (129 aa).

This sequence belongs to the universal ribosomal protein uS11 family. Part of the 30S ribosomal subunit. Interacts with proteins S7 and S18. Binds to IF-3.

Located on the platform of the 30S subunit, it bridges several disparate RNA helices of the 16S rRNA. Forms part of the Shine-Dalgarno cleft in the 70S ribosome. In Photobacterium profundum (strain SS9), this protein is Small ribosomal subunit protein uS11.